A 69-amino-acid chain; its full sequence is uncharacterized protein (69 aa).

This is an uncharacterized protein from Acheta domesticus (House cricket).